A 1342-amino-acid polypeptide reads, in one-letter code: DNA-directed RNA polymerase subunit beta (1342 aa).

It belongs to the RNA polymerase beta chain family. As to quaternary structure, the RNAP catalytic core consists of 2 alpha, 1 beta, 1 beta' and 1 omega subunit. When a sigma factor is associated with the core the holoenzyme is formed, which can initiate transcription.

The catalysed reaction is RNA(n) + a ribonucleoside 5'-triphosphate = RNA(n+1) + diphosphate. Its function is as follows. DNA-dependent RNA polymerase catalyzes the transcription of DNA into RNA using the four ribonucleoside triphosphates as substrates. The protein is DNA-directed RNA polymerase subunit beta of Actinobacillus pleuropneumoniae serotype 5b (strain L20).